The primary structure comprises 435 residues: Cyclin-dependent kinase 14 (435 aa).

Residues 75–92 (RTQSSFDPFEKTSNQPTS) are compositionally biased toward polar residues. Residues 75–97 (RTQSSFDPFEKTSNQPTSPKFGK) are disordered. Positions 101–385 (YEKLEKLGEG…AQAALNHDYF (285 aa)) constitute a Protein kinase domain. Residues 107–115 (LGEGSYATV) and K130 contribute to the ATP site. D222 acts as the Proton acceptor in catalysis.

Belongs to the protein kinase superfamily. CMGC Ser/Thr protein kinase family. CDC2/CDKX subfamily. In terms of assembly, interacts with ccny; ccny mediates its recruitment to the plasma membrane and promotes phosphorylation of lrp6.

The protein localises to the cell membrane. The enzyme catalyses L-seryl-[protein] + ATP = O-phospho-L-seryl-[protein] + ADP + H(+). It carries out the reaction L-threonyl-[protein] + ATP = O-phospho-L-threonyl-[protein] + ADP + H(+). Serine/threonine-protein kinase involved in the control of the eukaryotic cell cycle, whose activity is controlled by an associated cyclin. Acts as a cell-cycle regulator of Wnt signaling pathway during G2/M phase by mediating the phosphorylation of lrp6, leading to the activation of the Wnt signaling pathway. The sequence is that of Cyclin-dependent kinase 14 (cdk14) from Xenopus laevis (African clawed frog).